The primary structure comprises 130 residues: Small ribosomal subunit protein uS9 (130 aa).

Basic and acidic residues predominate over residues 99-110; it reads KKAGFLTRDPRM. The disordered stretch occupies residues 99–130; that stretch reads KKAGFLTRDPRMKERKKYGLKKARRAPQFSKR. Basic residues predominate over residues 111–130; it reads KERKKYGLKKARRAPQFSKR.

Belongs to the universal ribosomal protein uS9 family.

In Clostridium botulinum (strain Alaska E43 / Type E3), this protein is Small ribosomal subunit protein uS9.